We begin with the raw amino-acid sequence, 506 residues long: 2-isopropylmalate synthase (506 aa).

The 263-residue stretch at 4–266 (ILFMDTTLRD…EPSMTLKEIK (263 aa)) folds into the Pyruvate carboxyltransferase domain. Residues aspartate 13, histidine 201, histidine 203, and asparagine 237 each coordinate Mn(2+). Residues 390–506 (NITQLQVHFV…KLKSFIQLVK (117 aa)) form a regulatory domain region.

This sequence belongs to the alpha-IPM synthase/homocitrate synthase family. LeuA type 1 subfamily. Homodimer. It depends on Mn(2+) as a cofactor.

It localises to the cytoplasm. The catalysed reaction is 3-methyl-2-oxobutanoate + acetyl-CoA + H2O = (2S)-2-isopropylmalate + CoA + H(+). The protein operates within amino-acid biosynthesis; L-leucine biosynthesis; L-leucine from 3-methyl-2-oxobutanoate: step 1/4. Functionally, catalyzes the condensation of the acetyl group of acetyl-CoA with 3-methyl-2-oxobutanoate (2-ketoisovalerate) to form 3-carboxy-3-hydroxy-4-methylpentanoate (2-isopropylmalate). The sequence is that of 2-isopropylmalate synthase from Bacillus cereus (strain 03BB102).